The sequence spans 598 residues: MFS transporter L2 (598 aa).

A run of 3 helical transmembrane segments spans residues 83-103 (IAAFLSLCIIVLMAALDATSI), 122-142 (FWAGTSFLLTSTIFQPVLGSF), and 150-170 (SLIYISLVFFLAGSIIPAVAN). N-linked (GlcNAc...) asparagine glycosylation occurs at N171. The next 5 membrane-spanning stretches (helical) occupy residues 183 to 203 (GVGGGGIIALTEMVVVDTVPL), 212 to 232 (FFGMMWSFGTVAGPLIGGAFA), 239 to 259 (WVFWINLPFLGIGTVLITVFL), 277 to 297 (WIGMVLFLGSTTGFLIPITWG), and 309 to 329 (LVPLIVSAAGIVAFIVHQEKF). Residue N342 is glycosylated (N-linked (GlcNAc...) asparagine). Helical transmembrane passes span 346 to 366 (ALLYLTTVIHGIILWAILYFM), 383 to 403 (VALFPWTFTVAPGAVATGIAI), 411 to 431 (WANWAGWFLATLGSGLLILLK), 439 to 459 (WIFLNLVGGIGTGILFPAMAL), 476 to 496 (MFSFFRAFGQTLGVAIGGVVF), and 550 to 570 (YIWIVATVLAGVSLVATLFID).

It belongs to the major facilitator superfamily.

The protein resides in the membrane. In terms of biological role, MFS transporter; part of the gene cluster that mediates the biosynthesis of squalestatin S1 (SQS1, also known as zaragozic acid A), a lead compound for the treatment of hyper-cholesterolemia by targeting squalene synthase (SS). The protein is MFS transporter L2 of Phoma sp. (strain ATCC 20986 / MF5453).